Reading from the N-terminus, the 236-residue chain is Purine nucleoside phosphorylase DeoD-type (236 aa).

An a purine D-ribonucleoside-binding site is contributed by His-4. Phosphate is bound by residues Gly-20, Arg-24, Arg-43, and 87-90 (RVGT). Residues 179-181 (EME) and 203-204 (SD) contribute to the a purine D-ribonucleoside site. Asp-204 functions as the Proton donor in the catalytic mechanism.

Belongs to the PNP/UDP phosphorylase family. Homohexamer; trimer of homodimers.

It catalyses the reaction a purine D-ribonucleoside + phosphate = a purine nucleobase + alpha-D-ribose 1-phosphate. The catalysed reaction is a purine 2'-deoxy-D-ribonucleoside + phosphate = a purine nucleobase + 2-deoxy-alpha-D-ribose 1-phosphate. Its function is as follows. Catalyzes the reversible phosphorolytic breakdown of the N-glycosidic bond in the beta-(deoxy)ribonucleoside molecules, with the formation of the corresponding free purine bases and pentose-1-phosphate. The protein is Purine nucleoside phosphorylase DeoD-type of Streptococcus pneumoniae serotype 2 (strain D39 / NCTC 7466).